The primary structure comprises 183 residues: Translation initiation factor IF-3 (183 aa).

It belongs to the IF-3 family. As to quaternary structure, monomer.

It is found in the cytoplasm. IF-3 binds to the 30S ribosomal subunit and shifts the equilibrium between 70S ribosomes and their 50S and 30S subunits in favor of the free subunits, thus enhancing the availability of 30S subunits on which protein synthesis initiation begins. This chain is Translation initiation factor IF-3, found in Yersinia pseudotuberculosis serotype O:1b (strain IP 31758).